Consider the following 712-residue polypeptide: Transcriptional regulator GZF3 (712 aa).

Over residues 1–13 (MSMSDIQQRPQIP) the composition is skewed to polar residues. Disordered stretches follow at residues 1–20 (MSMS…TAAV), 27–135 (NVNT…GPVC), 173–280 (SLKT…HHHL), 377–533 (DVSS…GNNF), and 596–712 (LNNN…KVKI). Composition is skewed to low complexity over residues 27–84 (NVNT…EQSS) and 107–131 (PKTG…ISMS). Residues 135–159 (CGNCQTQTTPLWRRDETGQVLCNAC) form a GATA-type zinc finger. A compositionally biased stretch (low complexity) spans 186 to 199 (KQNGSNSQSSKSSG). Over residues 213–223 (GKKSPKSKKKS) the composition is skewed to basic residues. Over residues 246–261 (ATSNNTPTFKSTTSQS) the composition is skewed to polar residues. Positions 268 to 280 (NHHHQHHNHHHHL) are enriched in basic residues. Positions 379-414 (SSINGSSTSLSSSSASSSIFSSVAPSTSSSSSLSNG) are enriched in low complexity. 2 stretches are compositionally biased toward polar residues: residues 429 to 447 (SKIS…TPLQ) and 484 to 498 (QQSM…RSPI). Composition is skewed to low complexity over residues 499–532 (NGNQ…NGNN) and 596–616 (LNNN…QPQQ). Residues 545 to 598 (TRISELELVNDLYRTRIMELEAMEQAARLRENSMKKRLDEVMNLQINYQNLLNN) adopt a coiled-coil conformation. The segment covering 631 to 667 (DQGSQSISPNVSITGSTTITSPNSRSKIISETTPTHH) has biased composition (polar residues).

It localises to the nucleus. In terms of biological role, probable transcription factor involved in response to fluconazole, LiCl, and copper. The protein is Transcriptional regulator GZF3 (GZF3) of Candida albicans (strain SC5314 / ATCC MYA-2876) (Yeast).